Reading from the N-terminus, the 416-residue chain is Probable carboxypeptidase An18g06210 (416 aa).

The first 16 residues, 1–16 (MKSPISLLAAVGVASA), serve as a signal peptide directing secretion. N-linked (GlcNAc...) asparagine glycosylation is found at asparagine 54, asparagine 70, and asparagine 129. Zn(2+) is bound at residue aspartate 142. Glutamate 174 (proton acceptor) is an active-site residue. Residue glutamate 175 coordinates Zn(2+). N-linked (GlcNAc...) asparagine glycosylation is found at asparagine 187 and asparagine 319.

It belongs to the peptidase M20A family. Zn(2+) serves as cofactor.

The protein localises to the secreted. The polypeptide is Probable carboxypeptidase An18g06210 (Aspergillus niger (strain ATCC MYA-4892 / CBS 513.88 / FGSC A1513)).